The sequence spans 288 residues: Protoheme IX farnesyltransferase (288 aa).

Transmembrane regions (helical) follow at residues 8–28, 35–55, 75–95, 105–125, 130–150, 161–181, 205–225, 230–250, and 265–285; these read IIKPGIIFGNIISTIGGFLLA, VNLFIFTISATAILIASASIF, IAIGLISSNIAYIYALILLIL, FLTIFISMLGFFIYVFIYSLL, SVYSTIIGSLSGATPPIIGYC, FILLCIFSFWQIPHSYAIGLV, INIIIYIIAFFISTIMLFFAG, NYLFFSIFFGLIWIFIAIKGF, and IFLFSIVIITAISILISIDYK.

It belongs to the UbiA prenyltransferase family. Protoheme IX farnesyltransferase subfamily.

The protein localises to the cell membrane. The catalysed reaction is heme b + (2E,6E)-farnesyl diphosphate + H2O = Fe(II)-heme o + diphosphate. It participates in porphyrin-containing compound metabolism; heme O biosynthesis; heme O from protoheme: step 1/1. Functionally, converts heme B (protoheme IX) to heme O by substitution of the vinyl group on carbon 2 of heme B porphyrin ring with a hydroxyethyl farnesyl side group. In Wigglesworthia glossinidia brevipalpis, this protein is Protoheme IX farnesyltransferase.